We begin with the raw amino-acid sequence, 381 residues long: Queuine tRNA-ribosyltransferase (381 aa).

D96 functions as the Proton acceptor in the catalytic mechanism. Residues 96 to 100, D150, Q193, and G220 contribute to the substrate site; that span reads DSGGF. The interval 251 to 257 is RNA binding; that stretch reads GVGAPDS. The active-site Nucleophile is D270. The tract at residues 275–279 is RNA binding; important for wobble base 34 recognition; it reads TRIAR. 4 residues coordinate Zn(2+): C308, C310, C313, and H339.

Belongs to the queuine tRNA-ribosyltransferase family. In terms of assembly, homodimer. Within each dimer, one monomer is responsible for RNA recognition and catalysis, while the other monomer binds to the replacement base PreQ1. Zn(2+) serves as cofactor.

It catalyses the reaction 7-aminomethyl-7-carbaguanine + guanosine(34) in tRNA = 7-aminomethyl-7-carbaguanosine(34) in tRNA + guanine. It functions in the pathway tRNA modification; tRNA-queuosine biosynthesis. In terms of biological role, catalyzes the base-exchange of a guanine (G) residue with the queuine precursor 7-aminomethyl-7-deazaguanine (PreQ1) at position 34 (anticodon wobble position) in tRNAs with GU(N) anticodons (tRNA-Asp, -Asn, -His and -Tyr). Catalysis occurs through a double-displacement mechanism. The nucleophile active site attacks the C1' of nucleotide 34 to detach the guanine base from the RNA, forming a covalent enzyme-RNA intermediate. The proton acceptor active site deprotonates the incoming PreQ1, allowing a nucleophilic attack on the C1' of the ribose to form the product. After dissociation, two additional enzymatic reactions on the tRNA convert PreQ1 to queuine (Q), resulting in the hypermodified nucleoside queuosine (7-(((4,5-cis-dihydroxy-2-cyclopenten-1-yl)amino)methyl)-7-deazaguanosine). The protein is Queuine tRNA-ribosyltransferase of Enterococcus faecalis (strain ATCC 700802 / V583).